The primary structure comprises 134 residues: Transcription antitermination protein NusB (134 aa).

The protein belongs to the NusB family.

Functionally, involved in transcription antitermination. Required for transcription of ribosomal RNA (rRNA) genes. Binds specifically to the boxA antiterminator sequence of the ribosomal RNA (rrn) operons. The chain is Transcription antitermination protein NusB from Halalkalibacterium halodurans (strain ATCC BAA-125 / DSM 18197 / FERM 7344 / JCM 9153 / C-125) (Bacillus halodurans).